The sequence spans 238 residues: Probable transcriptional regulatory protein TC_0742 (238 aa).

Positions 1 to 21 are disordered; that stretch reads MAGHSKWANTKHRKERADHKK. Residues 9–21 show a composition bias toward basic residues; the sequence is NTKHRKERADHKK.

The protein belongs to the TACO1 family.

Its subcellular location is the cytoplasm. The protein is Probable transcriptional regulatory protein TC_0742 of Chlamydia muridarum (strain MoPn / Nigg).